The sequence spans 375 residues: N-acetyldiaminopimelate deacetylase (375 aa).

Aspartate 69 is a catalytic residue. The active-site Proton acceptor is glutamate 128.

It belongs to the peptidase M20A family. N-acetyldiaminopimelate deacetylase subfamily.

The enzyme catalyses N-acetyl-(2S,6S)-2,6-diaminopimelate + H2O = (2S,6S)-2,6-diaminopimelate + acetate. The protein operates within amino-acid biosynthesis; L-lysine biosynthesis via DAP pathway; LL-2,6-diaminopimelate from (S)-tetrahydrodipicolinate (acetylase route): step 3/3. Functionally, catalyzes the conversion of N-acetyl-diaminopimelate to diaminopimelate and acetate. The polypeptide is N-acetyldiaminopimelate deacetylase (Streptococcus suis (strain 05ZYH33)).